We begin with the raw amino-acid sequence, 165 residues long: RNA polymerase II transcriptional coactivator KELP (165 aa).

The region spanning 3–60 is the DEK-C domain; that stretch reads KETKEKIEKTVIEILSESDMKEITEFKVRKLASEKLAIDLSEKSHKAFVRSVVEKFLD. A disordered region spans residues 66–93; it reads EYENSQVNKEEEDGDKDCGKGNKEFDDD.

This sequence belongs to the transcriptional coactivator PC4 family.

The protein localises to the nucleus. Its function is as follows. General coactivator that functions cooperatively with TAFs and mediates functional interactions between upstream activators and the general transcriptional machinery. Binds single-stranded DNA. The sequence is that of RNA polymerase II transcriptional coactivator KELP (KELP) from Arabidopsis thaliana (Mouse-ear cress).